Reading from the N-terminus, the 513-residue chain is ATP synthase subunit alpha (513 aa).

Residue 169–176 (GDRQTGKT) coordinates ATP.

Belongs to the ATPase alpha/beta chains family. In terms of assembly, F-type ATPases have 2 components, CF(1) - the catalytic core - and CF(0) - the membrane proton channel. CF(1) has five subunits: alpha(3), beta(3), gamma(1), delta(1), epsilon(1). CF(0) has three main subunits: a(1), b(2) and c(9-12). The alpha and beta chains form an alternating ring which encloses part of the gamma chain. CF(1) is attached to CF(0) by a central stalk formed by the gamma and epsilon chains, while a peripheral stalk is formed by the delta and b chains.

It is found in the cell inner membrane. It carries out the reaction ATP + H2O + 4 H(+)(in) = ADP + phosphate + 5 H(+)(out). Functionally, produces ATP from ADP in the presence of a proton gradient across the membrane. The alpha chain is a regulatory subunit. The sequence is that of ATP synthase subunit alpha from Shewanella oneidensis (strain ATCC 700550 / JCM 31522 / CIP 106686 / LMG 19005 / NCIMB 14063 / MR-1).